The chain runs to 357 residues: Undecaprenyl-phosphate alpha-N-acetylglucosaminyl 1-phosphate transferase (357 aa).

Helical transmembrane passes span 40–60, 64–84, 124–144, 183–203, 209–229, 238–258, and 291–311; these read GAIP…FYLL, QMRL…IGMI, FQLT…IAAI, WSFA…GIPF, VFMG…ILLL, MNPV…IAIM, and FLLI…GEIF.

It belongs to the glycosyltransferase 4 family. WecA subfamily. Requires Mg(2+) as cofactor. Mn(2+) is required as a cofactor.

The protein resides in the cell inner membrane. The catalysed reaction is di-trans,octa-cis-undecaprenyl phosphate + UDP-N-acetyl-alpha-D-glucosamine = N-acetyl-alpha-D-glucosaminyl-di-trans,octa-cis-undecaprenyl diphosphate + UMP. It participates in bacterial outer membrane biogenesis; LPS O-antigen biosynthesis. Functionally, catalyzes the transfer of the GlcNAc-1-phosphate moiety from UDP-GlcNAc onto the carrier lipid undecaprenyl phosphate (C55-P), yielding GlcNAc-pyrophosphoryl-undecaprenyl (GlcNAc-PP-C55). The protein is Undecaprenyl-phosphate alpha-N-acetylglucosaminyl 1-phosphate transferase of Pasteurella multocida (strain Pm70).